A 343-amino-acid chain; its full sequence is MITLAVDCMGGDHGPGVTLPACRQFLEHHPDARLILVGGQDSLQGLVHERVTHVVASEVVTMDDAVEVALRRKKDSSMRVAIQQVKDGVAHAAISAGNTGALMAIARYLLKTLDGIDRPAIATQMPNAQGGATTVLDLGANVDCTAEHLLQFAVMGSALVSVLQDRDEPLVGLLNIGEEVIKGNDVIKKAGGLLRSAAKSGDLNFHGNVEGNDIFKGTVDIVVCDGFVGNVALKASEGVASMIAGALKQEFSRNIFTKIAAIVAYPVLSAIMKRMDHRRYNGAALLGLRGLVFKSHGSADALAFEQALIRAYDAARNNLLDRVRARVAHAAPLLAAADAQPAS.

This sequence belongs to the PlsX family. As to quaternary structure, homodimer. Probably interacts with PlsY.

It is found in the cytoplasm. It carries out the reaction a fatty acyl-[ACP] + phosphate = an acyl phosphate + holo-[ACP]. It participates in lipid metabolism; phospholipid metabolism. Its function is as follows. Catalyzes the reversible formation of acyl-phosphate (acyl-PO(4)) from acyl-[acyl-carrier-protein] (acyl-ACP). This enzyme utilizes acyl-ACP as fatty acyl donor, but not acyl-CoA. This is Phosphate acyltransferase from Acidovorax sp. (strain JS42).